The primary structure comprises 89 residues: MSITAERKTALIKEYARGGADTGSPEVQIAILTERIANLTGHFKTHTKDNHSRRGLLKLVSQRRSLLDYLKRKDEARYRALIERLGIRR.

This sequence belongs to the universal ribosomal protein uS15 family. In terms of assembly, part of the 30S ribosomal subunit. Forms a bridge to the 50S subunit in the 70S ribosome, contacting the 23S rRNA.

Its function is as follows. One of the primary rRNA binding proteins, it binds directly to 16S rRNA where it helps nucleate assembly of the platform of the 30S subunit by binding and bridging several RNA helices of the 16S rRNA. Forms an intersubunit bridge (bridge B4) with the 23S rRNA of the 50S subunit in the ribosome. This chain is Small ribosomal subunit protein uS15, found in Methylobacterium nodulans (strain LMG 21967 / CNCM I-2342 / ORS 2060).